A 209-amino-acid chain; its full sequence is Uracil phosphoribosyltransferase (209 aa).

Residues Arg-79, Arg-104, and 131–139 (DPMLATGVS) each bind 5-phospho-alpha-D-ribose 1-diphosphate. Uracil contacts are provided by residues Ile-194 and 199–201 (GDA). Residue Asp-200 participates in 5-phospho-alpha-D-ribose 1-diphosphate binding.

It belongs to the UPRTase family. Requires Mg(2+) as cofactor.

It catalyses the reaction UMP + diphosphate = 5-phospho-alpha-D-ribose 1-diphosphate + uracil. Its pathway is pyrimidine metabolism; UMP biosynthesis via salvage pathway; UMP from uracil: step 1/1. Allosterically activated by GTP. In terms of biological role, catalyzes the conversion of uracil and 5-phospho-alpha-D-ribose 1-diphosphate (PRPP) to UMP and diphosphate. This chain is Uracil phosphoribosyltransferase, found in Thermotoga maritima (strain ATCC 43589 / DSM 3109 / JCM 10099 / NBRC 100826 / MSB8).